The chain runs to 281 residues: ATP phosphoribosyltransferase (281 aa).

The protein belongs to the ATP phosphoribosyltransferase family. Long subfamily. Equilibrium between an active dimeric form, an inactive hexameric form and higher aggregates. Interconversion between the various forms is largely reversible and is influenced by the natural substrates and inhibitors of the enzyme. It depends on Mg(2+) as a cofactor.

The protein resides in the cytoplasm. The enzyme catalyses 1-(5-phospho-beta-D-ribosyl)-ATP + diphosphate = 5-phospho-alpha-D-ribose 1-diphosphate + ATP. The protein operates within amino-acid biosynthesis; L-histidine biosynthesis; L-histidine from 5-phospho-alpha-D-ribose 1-diphosphate: step 1/9. With respect to regulation, feedback inhibited by histidine. Catalyzes the condensation of ATP and 5-phosphoribose 1-diphosphate to form N'-(5'-phosphoribosyl)-ATP (PR-ATP). Has a crucial role in the pathway because the rate of histidine biosynthesis seems to be controlled primarily by regulation of HisG enzymatic activity. In Mycolicibacterium gilvum (strain PYR-GCK) (Mycobacterium gilvum (strain PYR-GCK)), this protein is ATP phosphoribosyltransferase.